The following is a 535-amino-acid chain: Reticuline oxidase (535 aa).

Positions Met-1–Gly-23 are cleaved as a signal peptide. N-linked (GlcNAc...) asparagine glycosylation is present at Asn-42. The region spanning Thr-71–Val-245 is the FAD-binding PCMH-type domain. Residues His-108–Cys-170 constitute a cross-link (6-(S-cysteinyl)-8alpha-(pros-histidyl)-FAD (His-Cys)). The N-linked (GlcNAc...) asparagine glycan is linked to Asn-475.

Belongs to the oxygen-dependent FAD-linked oxidoreductase family. Requires FAD as cofactor. It depends on a metal cation as a cofactor. Post-translationally, the FAD cofactor is bound via a bicovalent 6-S-cysteinyl, 8alpha-N1-histidyl FAD linkage. Expressed in roots and stems. Not detected in leaves or reproductive organs. Restricted to the parietal region of sieve elements adjacent or proximal to laticifers.

Its subcellular location is the cytoplasmic vesicle. The enzyme catalyses (S)-reticuline + O2 = (S)-scoulerine + H2O2 + H(+). It functions in the pathway alkaloid biosynthesis; (S)-scoulerine biosynthesis; (S)-scoulerine from (S)-reticuline: step 1/1. In terms of biological role, oxygen-dependent FAD-dependent oxidoreductase essential to the formation of benzophenanthridine alkaloids in the response of plants to pathogenic attack. Catalyzes the stereospecific conversion of the N-methyl moiety of (S)-reticuline into the berberine bridge carbon of (S)-scoulerine. Involved in the biosynthesis of sanguinarine. The sequence is that of Reticuline oxidase (BBE1) from Papaver somniferum (Opium poppy).